A 136-amino-acid chain; its full sequence is Protein PsiE homolog (136 aa).

The next 4 membrane-spanning stretches (helical) occupy residues 15–35 (AMQTVLNLGLLCLGIILIVFL), 58–78 (VEGLVVYFLYFEFIALIVKYF), 83–103 (HFPLRYFVYIGITAIVRLIII), and 108–128 (PMAVLIYSAAILILVITLWLC).

It belongs to the PsiE family.

The protein localises to the cell inner membrane. The sequence is that of Protein PsiE homolog from Klebsiella pneumoniae (strain 342).